A 287-amino-acid chain; its full sequence is MAKDVEAVPGEGFQTRDYQDPPPAPFIDGAELKKWSFYRAVIAEFVATLLFLYITVLTVIGYKIQSDTDAGGVDCGGVGILGIAWAFGGMIFILVYCTAGISGGHINPAVTFGLFLARKVSLPRALLYIIAQCLGAICGVGFVKAFQSSYYTRYGGGANSLADGYSTGTGLAAEIIGTFVLVYTVFSATDPKRSARDSHVPVLAPLPIGFAVFMVHLATIPITGTGINPARSFGAAVIYNKSKPWDDHWIFWVGPFIGAAIAAFYHQFVLRASGSKSLGSFRSAANV.

Met1 is modified (N-acetylmethionine). Topologically, residues 2–39 (AKDVEAVPGEGFQTRDYQDPPPAPFIDGAELKKWSFYR) are cytoplasmic. Lys3 carries the N6,N6-dimethyllysine; partial modification. Residues 40–60 (AVIAEFVATLLFLYITVLTVI) form a helical membrane-spanning segment. At 61–83 (GYKIQSDTDAGGVDCGGVGILGI) the chain is on the extracellular side. Residues 84–104 (AWAFGGMIFILVYCTAGISGG) form a helical membrane-spanning segment. Residues 105–125 (HINPAVTFGLFLARKVSLPRA) lie on the Cytoplasmic side of the membrane. The NPA 1 signature appears at 107 to 109 (NPA). A helical transmembrane segment spans residues 126-146 (LLYIIAQCLGAICGVGFVKAF). Residues 147-167 (QSSYYTRYGGGANSLADGYST) are Extracellular-facing. Residues 168-188 (GTGLAAEIIGTFVLVYTVFSA) form a helical membrane-spanning segment. Over 189–201 (TDPKRSARDSHVP) the chain is Cytoplasmic. Residues 202-222 (VLAPLPIGFAVFMVHLATIPI) traverse the membrane as a helical segment. Residues 223–249 (TGTGINPARSFGAAVIYNKSKPWDDHW) are Extracellular-facing. The NPA 2 motif lies at 228 to 230 (NPA). A helical membrane pass occupies residues 250–270 (IFWVGPFIGAAIAAFYHQFVL). The Cytoplasmic segment spans residues 271 to 287 (RASGSKSLGSFRSAANV). 2 positions are modified to phosphoserine: Ser280 and Ser283.

Belongs to the MIP/aquaporin (TC 1.A.8) family. PIP (TC 1.A.8.11) subfamily. In terms of processing, ubiquitinated by RMA1, leading to proteasomal degradation. Post-translationally, the phosphorylation at Ser-280 and Ser-283 is altered by salt (NaCl) and hydrogen peroxide H(2)O(2) treatments. Phosphorylation of Ser-283 is required for plasma membrane targeting. As to expression, predominantly expressed in roots and green siliques. Also expressed at lower level above ground and in flower buds.

Its subcellular location is the cell membrane. Functionally, water channel required to facilitate the transport of water across cell membrane. Probably involved in root water uptake. Its function is impaired by Hg(2+). This is Aquaporin PIP2-1 (PIP2-1) from Arabidopsis thaliana (Mouse-ear cress).